Reading from the N-terminus, the 443-residue chain is Ribulose bisphosphate carboxylase large chain (443 aa).

The substrate site is built by Asn89 and Thr139. The active-site Proton acceptor is the Lys141. A substrate-binding site is contributed by Lys143. The Mg(2+) site is built by Lys167, Asp169, and Glu170. An N6-carboxylysine modification is found at Lys167. His260 acts as the Proton acceptor in catalysis. Residues Arg261, His293, and Ser345 each coordinate substrate.

The protein belongs to the RuBisCO large chain family. Type I subfamily. As to quaternary structure, heterohexadecamer of 8 large chains and 8 small chains; disulfide-linked. The disulfide link is formed within the large subunit homodimers. Mg(2+) serves as cofactor. Post-translationally, the disulfide bond which can form in the large chain dimeric partners within the hexadecamer appears to be associated with oxidative stress and protein turnover.

It localises to the plastid. Its subcellular location is the chloroplast. The catalysed reaction is 2 (2R)-3-phosphoglycerate + 2 H(+) = D-ribulose 1,5-bisphosphate + CO2 + H2O. It catalyses the reaction D-ribulose 1,5-bisphosphate + O2 = 2-phosphoglycolate + (2R)-3-phosphoglycerate + 2 H(+). RuBisCO catalyzes two reactions: the carboxylation of D-ribulose 1,5-bisphosphate, the primary event in carbon dioxide fixation, as well as the oxidative fragmentation of the pentose substrate in the photorespiration process. Both reactions occur simultaneously and in competition at the same active site. The polypeptide is Ribulose bisphosphate carboxylase large chain (Villarsia calthifolia (Marsh flower)).